Reading from the N-terminus, the 219-residue chain is GTP cyclohydrolase 1 (219 aa).

The interval 1 to 37 (MDAVLKSLSVRLPDAADKRSDTGRPERVTERPTRQEA) is disordered. Residues 14-37 (DAADKRSDTGRPERVTERPTRQEA) are compositionally biased toward basic and acidic residues. Zn(2+)-binding residues include Cys-108, His-111, and Cys-179.

Belongs to the GTP cyclohydrolase I family. In terms of assembly, homomer.

The catalysed reaction is GTP + H2O = 7,8-dihydroneopterin 3'-triphosphate + formate + H(+). It functions in the pathway cofactor biosynthesis; 7,8-dihydroneopterin triphosphate biosynthesis; 7,8-dihydroneopterin triphosphate from GTP: step 1/1. The protein is GTP cyclohydrolase 1 of Methylobacterium sp. (strain 4-46).